We begin with the raw amino-acid sequence, 337 residues long: Lipoate-protein ligase A (337 aa).

A BPL/LPL catalytic domain is found at 29–216 (DQNQTILFLW…AFFNYYQTTV (188 aa)). ATP is bound by residues Arg-71, 76-79 (GAVF), and Lys-134. Position 134 (Lys-134) interacts with (R)-lipoate.

This sequence belongs to the LplA family. As to quaternary structure, monomer.

The protein resides in the cytoplasm. The enzyme catalyses L-lysyl-[lipoyl-carrier protein] + (R)-lipoate + ATP = N(6)-[(R)-lipoyl]-L-lysyl-[lipoyl-carrier protein] + AMP + diphosphate + H(+). Its pathway is protein modification; protein lipoylation via exogenous pathway; protein N(6)-(lipoyl)lysine from lipoate: step 1/2. The protein operates within protein modification; protein lipoylation via exogenous pathway; protein N(6)-(lipoyl)lysine from lipoate: step 2/2. Functionally, catalyzes both the ATP-dependent activation of exogenously supplied lipoate to lipoyl-AMP and the transfer of the activated lipoyl onto the lipoyl domains of lipoate-dependent enzymes. This Blochmanniella floridana protein is Lipoate-protein ligase A.